The primary structure comprises 434 residues: MEGAELAGKILSTWLTLVLGFILLPSVFGVSLGISEIYMKILVKTLEWATIRIEKGTPKESILKNSASVGIIQRDESPMEKGLSGLRGRDFELSDVFYFSKKGLEAIVEDEVTQRFSSEELVSWNLLTRTNVNFQYISLRLTMVWVLGVIVRYCVLLPLRVTLAFIGISLLVIGTTLVGQLPDSSLKNWLSELVHLTCCRICVRALSGTIHYHNKQYRPQKGGICVANHTSPIDVLILTTDGCYAMVGQVHGGLMGIIQRAMVKACPHVWFERSEMKDRHLVTKRLKEHIADKKKLPILIFPEGTCINNTSVMMFKKGSFEIGGTIHPVAIKYNPQFGDAFWNSSKYNMVSYLLRMMTSWAIVCDVWYMPPMTREEGEDAVQFANRVKSAIAIQGGLTELPWDGGLKRAKVKDIFKEEQQKNYSKMIVGNGSLS.

The chain crosses the membrane as a helical span at residues 14–34 (WLTLVLGFILLPSVFGVSLGI). S68 and S77 each carry phosphoserine. 2 helical membrane-spanning segments follow: residues 137-157 (ISLR…CVLL) and 161-181 (VTLA…VGQL). The HXXXXD motif motif lies at 229–234 (HTSPID).

It belongs to the 1-acyl-sn-glycerol-3-phosphate acyltransferase family. In terms of tissue distribution, widely expressed. Expressed in liver, kidney, testis, brain, heart, skeletal muscle, thyroid, prostate, thymus and placenta. Also expressed lung and adipose tissue.

The protein resides in the endoplasmic reticulum membrane. The enzyme catalyses sn-glycerol 3-phosphate + an acyl-CoA = a 1-acyl-sn-glycero-3-phosphate + CoA. It catalyses the reaction a 1-acyl-sn-glycero-3-phosphate + an acyl-CoA = a 1,2-diacyl-sn-glycero-3-phosphate + CoA. The catalysed reaction is dodecanoyl-CoA + sn-glycerol 3-phosphate = 1-dodecanoyl-sn-glycerol 3-phosphate + CoA. It carries out the reaction sn-glycerol 3-phosphate + hexadecanoyl-CoA = 1-hexadecanoyl-sn-glycero-3-phosphate + CoA. The enzyme catalyses sn-glycerol 3-phosphate + (9Z)-octadecenoyl-CoA = 1-(9Z-octadecenoyl)-sn-glycero-3-phosphate + CoA. It catalyses the reaction (9Z,12Z)-octadecadienoyl-CoA + sn-glycerol 3-phosphate = 1-(9Z,12Z)-octadecadienoyl-sn-glycero-3-phosphate + CoA. The catalysed reaction is 1-tetradecanoyl-sn-glycerol 3-phosphate + (9Z)-octadecenoyl-CoA = 1-tetradecanoyl-2-(9Z)-octadecenoyl-sn-glycero-3-phosphate + CoA. It carries out the reaction 1-hexadecanoyl-sn-glycero-3-phosphate + (9Z)-octadecenoyl-CoA = 1-hexadecanoyl-2-(9Z-octadecenoyl)-sn-glycero-3-phosphate + CoA. The enzyme catalyses 1-(9Z-octadecenoyl)-sn-glycero-3-phosphate + (9Z)-octadecenoyl-CoA = 1,2-di-(9Z-octadecenoyl)-sn-glycero-3-phosphate + CoA. It catalyses the reaction 1-(6Z,9Z,12Z-octadecatrienoyl)-sn-glycero-3-phosphate + (9Z)-octadecenoyl-CoA = (6Z,9Z,12Z)-octadecatrienoyl-2-(9Z)-octadecenoyl-sn-glycero-3-phosphate + CoA. The catalysed reaction is 1-(9Z,12Z,15Z)-octadecatrienoyl-sn-glycero-3-phosphate + (9Z)-octadecenoyl-CoA = 1-(9Z,12Z,15Z)-octadecatrienoyl-2-(9Z)-octadecenoyl-sn-glycero-3-phosphate + CoA. It carries out the reaction 1-(9Z-octadecenoyl)-sn-glycero-3-phosphate + tetradecanoyl-CoA = 1-(9Z)-octadecenoyl-2-tetradecanoyl-sn-glycero-3-phosphate + CoA. The enzyme catalyses 1-(9Z-octadecenoyl)-sn-glycero-3-phosphate + hexadecanoyl-CoA = 1-(9Z)-octadecenoyl-2-hexadecanoyl-sn-glycero-3-phosphate + CoA. It catalyses the reaction 1-(9Z-octadecenoyl)-sn-glycero-3-phosphate + octadecanoyl-CoA = 1-(9Z-octadecenoyl)-2-octadecanoyl-sn-glycero-3-phosphate + CoA. The catalysed reaction is 1-(9Z-octadecenoyl)-sn-glycero-3-phosphate + (9Z,12Z)-octadecadienoyl-CoA = 1-(9Z)-octadecenoyl-2-(9Z,12Z)-octadecadienoyl-sn-glycero-3-phosphate + CoA. It carries out the reaction 1-(5Z,8Z,11Z,14Z-eicosatetraenoyl)-sn-glycero-3-phosphate + (9Z)-octadecenoyl-CoA = 1-(5Z,8Z,11Z,14Z)-eicosatetraenoyl-2-(9Z)-octadecenoyl-sn-glycero-3-phosphate + CoA. Its pathway is glycerolipid metabolism; triacylglycerol biosynthesis. It participates in phospholipid metabolism; CDP-diacylglycerol biosynthesis; CDP-diacylglycerol from sn-glycerol 3-phosphate: step 1/3. Its activity is regulated as follows. Inhibited by N-ethylmaleimide (NEM). Functionally, converts glycerol-3-phosphate to 1-acyl-sn-glycerol-3-phosphate (lysophosphatidic acid or LPA) by incorporating an acyl moiety at the sn-1 position of the glycerol backbone. Also converts LPA into 1,2-diacyl-sn-glycerol-3-phosphate (phosphatidic acid or PA) by incorporating an acyl moiety at the sn-2 position of the glycerol backbone. Protects cells against lipotoxicity. The chain is Glycerol-3-phosphate acyltransferase 3 from Homo sapiens (Human).